Consider the following 726-residue polypeptide: MAEYLRLPHSLALIRLRNPPVNAISPAVIHGIKEGLQKAMSDYTIKGIVISGANNIFCAGADIHGFSAPLSFGTGSGLGPIVDEMQRYEKPVVAAIQGMALGGGLELSLGCHYRIAHAEARIGFPEVTLGILPGARGTQLLPRLIGVPAALDLITSGRHITAGEALKLGILDKVVNSAPVEEAIKFAQKILNQPLEPRRILNRPVSSLPNMDAIFGEAVEKMRRQHPGQLAPETCVRSVQASVQYPYEGGIMKERELFLNLQHSGQAKALQYAFFAERSAPKWSTPSGASWKTAAARPVSSVGVLGLGTMGRGIAISFARVGIPVIAVESDPKQLETAQKLITSILEKEASKSRQQCGQQRSGPKPRFSSSMKDLASVDLVVEAVFEDMNLKKRVFAELSAVCKPEAFLCTNTSALDVDEIATSTNRPQQVIGTHFFSPAHVMKLLEVIPSRHSSPTTIATVMDLAKKIKKVAVVVGNCYGFVGNRMLRSYYEQTNFLLEDGSKPEDIDQALEEFGFRMGPFRVSDLAGLDVGWKIRKGQGLTGPSLQGTAPARKRGNARYSPIADMLCELGRFGQKTGQGWYKYDKPLGRIHKPDPWLSKFLSEYRETHHIKPRVIGRDEILERCLYALINEAFRILGEGIAASPEHIDVIYLHGYGWPRHKGGPMFYAASVGLPTVLEKLQKYYQQNPDIPHLEPCNYLKKLASQGNPPLKEWQSLAGLPSSKL.

The interval 1–284 (MAEYLRLPHS…FAERSAPKWS (284 aa)) is enoyl-CoA hydratase / isomerase. Lysine 38 carries the post-translational modification N6-succinyllysine. Glycine 103 contributes to the substrate binding site. Residue lysine 167 is modified to N6-acetyllysine; alternate. Lysine 167 carries the N6-succinyllysine; alternate modification. The residue at position 173 (lysine 173) is an N6-acetyllysine. The residue at position 185 (lysine 185) is an N6-succinyllysine. At lysine 221 the chain carries N6-acetyllysine; alternate. Lysine 221 carries the N6-succinyllysine; alternate modification. 3 positions are modified to N6-succinyllysine: lysine 282, lysine 292, and lysine 333. Residues 285–575 (TPSGASWKTA…DMLCELGRFG (291 aa)) are 3-hydroxyacyl-CoA dehydrogenase. 2 positions are modified to N6-acetyllysine: lysine 348 and lysine 352. A disordered region spans residues 352–371 (KSRQQCGQQRSGPKPRFSSS). Over residues 353 to 371 (SRQQCGQQRSGPKPRFSSS) the composition is skewed to polar residues. N6-acetyllysine is present on lysine 467. Lysine 535 is modified (N6-succinyllysine). An N6-acetyllysine; alternate mark is found at lysine 587, lysine 594, and lysine 713. An N6-succinyllysine; alternate mark is found at lysine 587, lysine 594, and lysine 713. The short motif at 724–726 (SKL) is the Microbody targeting signal element. At lysine 725 the chain carries N6-succinyllysine.

The protein in the N-terminal section; belongs to the enoyl-CoA hydratase/isomerase family. In the C-terminal section; belongs to the 3-hydroxyacyl-CoA dehydrogenase family. In terms of assembly, monomer. Acetylated, leading to enhanced enzyme activity. Acetylation is enhanced by up to 80% after treatment either with trichostin A (TSA) or with nicotinamide (NAM) with highest increase on Lys-348. Acetylation and enzyme activity increased by about 1.5% on addition of fatty acids.

Its subcellular location is the peroxisome. It catalyses the reaction a (3S)-3-hydroxyacyl-CoA = a (2E)-enoyl-CoA + H2O. The enzyme catalyses a 4-saturated-(3S)-3-hydroxyacyl-CoA = a (3E)-enoyl-CoA + H2O. It carries out the reaction a (3Z)-enoyl-CoA = a 4-saturated (2E)-enoyl-CoA. The catalysed reaction is a (3E)-enoyl-CoA = a 4-saturated (2E)-enoyl-CoA. It catalyses the reaction a (3S)-3-hydroxyacyl-CoA + NAD(+) = a 3-oxoacyl-CoA + NADH + H(+). The enzyme catalyses (2S,3S)-3-hydroxy-2-methylbutanoyl-CoA = (2E)-2-methylbut-2-enoyl-CoA + H2O. It carries out the reaction (3S)-hydroxyhexadecanoyl-CoA + NAD(+) = 3-oxohexadecanoyl-CoA + NADH + H(+). The catalysed reaction is (3S)-hydroxyhexadecanoyl-CoA = (2E)-hexadecenoyl-CoA + H2O. It catalyses the reaction (2E)-hexadecenedioyl-CoA + H2O = (3S)-hydroxyhexadecanedioyl-CoA. The enzyme catalyses (3S)-hydroxyhexadecanedioyl-CoA + NAD(+) = 3-oxohexadecanedioyl-CoA + NADH + H(+). It carries out the reaction (3E,5Z)-tetradecadienoyl-CoA = (2E,5Z)-tetradecadienoyl-CoA. The catalysed reaction is (3E,5Z)-octadienoyl-CoA = (2E,5Z)-octadienoyl-CoA. It catalyses the reaction (3S)-hydroxydecanoyl-CoA + NAD(+) = 3-oxodecanoyl-CoA + NADH + H(+). The enzyme catalyses (3E)-decenoyl-CoA = (2E)-decenoyl-CoA. It carries out the reaction (3Z)-hexenoyl-CoA = (2E)-hexenoyl-CoA. The catalysed reaction is (3E)-hexenoyl-CoA = (2E)-hexenoyl-CoA. It catalyses the reaction (3S)-hydroxydecanoyl-CoA = (2E)-decenoyl-CoA + H2O. The enzyme catalyses (3S)-hydroxyhexanoyl-CoA = (2E)-hexenoyl-CoA + H2O. The protein operates within lipid metabolism; fatty acid beta-oxidation. With respect to regulation, enzyme activity enhanced by acetylation. In terms of biological role, peroxisomal trifunctional enzyme possessing 2-enoyl-CoA hydratase, 3-hydroxyacyl-CoA dehydrogenase, and delta 3, delta 2-enoyl-CoA isomerase activities. Catalyzes two of the four reactions of the long chain fatty acids peroxisomal beta-oxidation pathway. Can also use branched-chain fatty acids such as 2-methyl-2E-butenoyl-CoA as a substrate, which is hydrated into (2S,3S)-3-hydroxy-2-methylbutanoyl-CoA. Optimal isomerase for 2,5 double bonds into 3,5 form isomerization in a range of enoyl-CoA species. Also able to isomerize both 3-cis and 3-trans double bonds into the 2-trans form in a range of enoyl-CoA species. Regulates the amount of medium-chain dicarboxylic fatty acids which are essential regulators of all fatty acid oxidation pathways. Also involved in the degradation of long-chain dicarboxylic acids through peroxisomal beta-oxidation. The sequence is that of Peroxisomal bifunctional enzyme (EHHADH) from Cavia porcellus (Guinea pig).